The following is a 512-amino-acid chain: Glutathione-binding protein GsiB (512 aa).

The first 26 residues, 1–26 (MTQFITHKWLAALGLASSIAAFPALA), serve as a signal peptide directing secretion.

This sequence belongs to the bacterial solute-binding protein 5 family. The complex is composed of two ATP-binding proteins (GsiA), two transmembrane proteins (GsiC and GsiD) and a solute-binding protein (GsiB).

It is found in the periplasm. Functionally, part of the ABC transporter complex GsiABCD involved in glutathione import. Binds glutathione. This Salmonella paratyphi A (strain ATCC 9150 / SARB42) protein is Glutathione-binding protein GsiB.